Here is a 389-residue protein sequence, read N- to C-terminus: Na(+)/H(+) antiporter NhaA (389 aa).

The next 10 membrane-spanning stretches (helical) occupy residues Ile-8–Trp-28, Ile-48–Ile-68, Met-91–Ile-111, Gly-119–Phe-139, Asn-173–Leu-193, Ala-214–Leu-234, Trp-262–Phe-282, Leu-288–Gly-308, Leu-327–Val-347, and Gly-361–Ile-381.

This sequence belongs to the NhaA Na(+)/H(+) (TC 2.A.33) antiporter family.

It is found in the cell membrane. It catalyses the reaction Na(+)(in) + 2 H(+)(out) = Na(+)(out) + 2 H(+)(in). Functionally, na(+)/H(+) antiporter that extrudes sodium in exchange for external protons. The chain is Na(+)/H(+) antiporter NhaA from Desulfitobacterium hafniense (strain DSM 10664 / DCB-2).